The following is a 596-amino-acid chain: ATP-dependent lipid A-core flippase (596 aa).

6 helical membrane-spanning segments follow: residues 34-54, 80-100, 138-158, 164-184, 263-283, and 292-312; these read VWVLVAGVLAMAAVAATEAGI, AAVVGLALARAIAQYASGYLL, AVVFEVNQVLSVLMGVTITLV, VVFLLGYLFYLNWRLTLIVAI, QPLTQFLASIALAVVLTIAVV, and VGGFVAFVTAMLLIISPLKHL. An ABC transmembrane type-1 domain is found at 38 to 321; the sequence is VAGVLAMAAV…LMDVNQPLQR (284 aa). Positions 353 to 589 constitute an ABC transporter domain; the sequence is IEFSHVSFSY…GGLYAHLHRI (237 aa). 389-396 serves as a coordination point for ATP; sequence GPSGSGKT.

This sequence belongs to the ABC transporter superfamily. Lipid exporter (TC 3.A.1.106) family. In terms of assembly, homodimer.

It localises to the cell inner membrane. The enzyme catalyses ATP + H2O + lipid A-core oligosaccharideSide 1 = ADP + phosphate + lipid A-core oligosaccharideSide 2.. In terms of biological role, involved in lipopolysaccharide (LPS) biosynthesis. Translocates lipid A-core from the inner to the outer leaflet of the inner membrane. Transmembrane domains (TMD) form a pore in the inner membrane and the ATP-binding domain (NBD) is responsible for energy generation. The chain is ATP-dependent lipid A-core flippase from Burkholderia mallei (strain ATCC 23344).